Consider the following 86-residue polypeptide: uncharacterized protein (86 aa).

This is an uncharacterized protein from Psittacid herpesvirus 1 (isolate Amazon parrot/-/97-0001/1997) (PsHV-1).